Consider the following 139-residue polypeptide: uncharacterized protein (139 aa).

Residues 1–32 (MEFHDDKKNELQKKEEIITEAIDTLFQSSAFG) form the signal peptide. A sHSP domain is found at 44 to 139 (SSLKDVQTTI…TLFFPKNKHE (96 aa)).

Belongs to the small heat shock protein (HSP20) family.

This is an uncharacterized protein from Bacillus subtilis (strain 168).